The following is a 683-amino-acid chain: MSTPAVPQDLQLPPSQRAQSAFKEQRRQKLKEHLLRRKTLFAYKQENEMLSSSRDQRVVTSEDQVQEGTKVLKLKTKMADKENMKRPAESKNNTVVGKHCIPLKPSNELTNSTVVIDTHKPKDSNQTPHLLLTEDDPQSQHMTLSQAFHLKNNSKKKQMTTEKQKQDANMPKKPVLGSYRGQIVQSKINSFRKPLQVKDESSAATKKLSATIPKATKPQPVNTSSVTVKSNRSSNMTATTKFVSTTSQNTQLVRPPIRSHHSNTRDTVKQGISRTSANVTIRKGPHEKELLQSKTALSSVKTSSSQGIIRNKTLSRSIASEVIARPASLSNDKLMEKSEPVDQRRHTAGKAIVDSRSAQPKETSEERKARLSEWKAGKGRVLKRPPNSVVTQHEPAGQNEKPVGSFWTTMAEEDEQRLFTEKVNNTFSECLNLINEGCPKEDILVTLNDLIKNIPDAKKLVKYWICLALIEPITSPIENIIAIYEKAILAGAQPIEEMRHTIVDILTMKSQEKANLGENMEKSCASKEEVKEVSIEDTGVDVDPEKLEMESKLHRNLLFQDCEKEQDNKTKDPTHDVKTPNTETRTSCLIKYNVSTTPYLQSVKKKVQFDGTNSAFKELKFLTPVRRSRRLQEKTSKLPDMLKDHYPCVSSLEQLTELGRETDAFVCRPNAALCRVYYEADTT.

2 disordered regions span residues 1 to 28 (MSTP…QRRQ) and 153 to 175 (NSKK…KKPV). A phosphoserine mark is found at serine 178 and serine 190. Disordered regions lie at residues 214 to 236 (KATK…SSNM) and 336 to 403 (EKSE…EKPV). Positions 219–236 (QPVNTSSVTVKSNRSSNM) are enriched in polar residues. Composition is skewed to basic and acidic residues over residues 336-345 (EKSEPVDQRR) and 362-376 (ETSE…EWKA). Position 534 is a phosphoserine (serine 534). 2 positions are modified to phosphothreonine: threonine 579 and threonine 582. Position 595 is a phosphoserine (serine 595). Phosphothreonine occurs at positions 596 and 597. Tyrosine 599 carries the phosphotyrosine modification. At serine 602 the chain carries Phosphoserine.

The protein belongs to the CKAP2 family. Associates with alpha- and beta-tubulins. In terms of tissue distribution, abundant in testis, thymus, and in tumor derived cell lines, while barely detectable in liver, prostate, and kidney.

The protein resides in the cytoplasm. It is found in the cytoskeleton. Its subcellular location is the spindle. The protein localises to the spindle pole. Functionally, possesses microtubule stabilizing properties. Involved in regulating aneuploidy, cell cycling, and cell death in a p53/TP53-dependent manner. The chain is Cytoskeleton-associated protein 2 from Homo sapiens (Human).